The chain runs to 325 residues: 2-dehydro-3-deoxygluconokinase (325 aa).

Substrate-binding positions include Gly49–Asn53, Tyr105, Tyr121–Arg123, and Arg181. ATP-binding positions include Asn179–Arg181, Lys240–Gly245, and Gly269–Asp272. 2 residues coordinate substrate: Asp272 and Asp308. Asp272 serves as the catalytic Proton acceptor.

It belongs to the carbohydrate kinase PfkB family. Homohexamer; trimer of dimers.

It catalyses the reaction 2-dehydro-3-deoxy-D-gluconate + ATP = 2-dehydro-3-deoxy-6-phospho-D-gluconate + ADP + H(+). It functions in the pathway carbohydrate acid metabolism; 2-dehydro-3-deoxy-D-gluconate degradation; D-glyceraldehyde 3-phosphate and pyruvate from 2-dehydro-3-deoxy-D-gluconate: step 1/2. Functionally, involved in the degradation of glucose via the semi-phosphorylative Entner-Doudoroff pathway. Catalyzes the phosphorylation of 2-keto-3-deoxygluconate (KDG) yielding 2-keto-3-deoxy-6-phosphogluconate (KDPG). The chain is 2-dehydro-3-deoxygluconokinase (kdgK) from Thermoproteus tenax.